The primary structure comprises 316 residues: Ornithine carbamoyltransferase (316 aa).

Residues 57 to 60, glutamine 84, arginine 108, and 135 to 138 contribute to the carbamoyl phosphate site; these read STRT and HPCQ. L-ornithine contacts are provided by residues asparagine 166, aspartate 230, and 234–235; that span reads SM. Carbamoyl phosphate is bound by residues 269–270 and arginine 297; that span reads CL.

It belongs to the aspartate/ornithine carbamoyltransferase superfamily. OTCase family.

It localises to the cytoplasm. It catalyses the reaction carbamoyl phosphate + L-ornithine = L-citrulline + phosphate + H(+). The protein operates within amino-acid degradation; L-arginine degradation via ADI pathway; carbamoyl phosphate from L-arginine: step 2/2. Reversibly catalyzes the transfer of the carbamoyl group from carbamoyl phosphate (CP) to the N(epsilon) atom of ornithine (ORN) to produce L-citrulline. This chain is Ornithine carbamoyltransferase, found in Bacillus cereus (strain AH187).